A 396-amino-acid chain; its full sequence is Gap junction gamma-1 protein (396 aa).

The Cytoplasmic segment spans residues 1–22 (MSWSFLTRLLEEIHNHSTFVGK). The helical transmembrane segment at 23–45 (IWLTVLIAFRIALTAVGGESIYY) threads the bilayer. The Extracellular portion of the chain corresponds to 46–75 (DEQSKFVCNTEQPGCENVCYDAFAPLSHVR). A helical membrane pass occupies residues 76–95 (FWVFQIILVATPSVMYLGYA). Topologically, residues 96-175 (IHKIAKMEHG…RRIREDGLMK (80 aa)) are cytoplasmic. Positions 145 to 165 (ELESEKENKEQNQPKPKHDGR) are disordered. The segment covering 147–156 (ESEKENKEQN) has biased composition (basic and acidic residues). Residues 176 to 198 (IYVLQLLARTVFEVGFLIGQYFL) traverse the membrane as a helical segment. At 199–228 (YGFQVHPFYVCSRLPCPHKIDCFISRPTEK) the chain is on the extracellular side. The helical transmembrane segment at 229 to 248 (TIFLLIMYGVTGLCLLLNIW) threads the bilayer. Residues 249-396 (EMLHLGFGTI…SGDGKNSVWI (148 aa)) lie on the Cytoplasmic side of the membrane. The tract at residues 355–396 (AYSHQNNPHGPREKKAKVGSKAGSNKSSASSKSGDGKNSVWI) is disordered. Residues 373 to 396 (GSKAGSNKSSASSKSGDGKNSVWI) show a composition bias toward low complexity.

It belongs to the connexin family. Gamma-type subfamily. A connexon is composed of a hexamer of connexins. Interacts with CNST.

The protein resides in the cell membrane. Its subcellular location is the cell junction. The protein localises to the gap junction. One gap junction consists of a cluster of closely packed pairs of transmembrane channels, the connexons, through which materials of low MW diffuse from one cell to a neighboring cell. This Canis lupus familiaris (Dog) protein is Gap junction gamma-1 protein (GJC1).